A 386-amino-acid polypeptide reads, in one-letter code: Succinate--CoA ligase [ADP-forming] subunit beta (386 aa).

Residues 9–244 enclose the ATP-grasp domain; the sequence is KEVLRKYGVA…LDEEDPKEIE (236 aa). ATP-binding positions include lysine 46, 53-55, glutamate 99, cysteine 102, and glutamate 107; that span reads GRG. Residues asparagine 199 and aspartate 213 each contribute to the Mg(2+) site. Substrate-binding positions include asparagine 264 and 321 to 323; that span reads GIM.

The protein belongs to the succinate/malate CoA ligase beta subunit family. As to quaternary structure, heterotetramer of two alpha and two beta subunits. It depends on Mg(2+) as a cofactor.

The enzyme catalyses succinate + ATP + CoA = succinyl-CoA + ADP + phosphate. It catalyses the reaction GTP + succinate + CoA = succinyl-CoA + GDP + phosphate. The protein operates within carbohydrate metabolism; tricarboxylic acid cycle; succinate from succinyl-CoA (ligase route): step 1/1. Succinyl-CoA synthetase functions in the citric acid cycle (TCA), coupling the hydrolysis of succinyl-CoA to the synthesis of either ATP or GTP and thus represents the only step of substrate-level phosphorylation in the TCA. The beta subunit provides nucleotide specificity of the enzyme and binds the substrate succinate, while the binding sites for coenzyme A and phosphate are found in the alpha subunit. This Bacillus licheniformis (strain ATCC 14580 / DSM 13 / JCM 2505 / CCUG 7422 / NBRC 12200 / NCIMB 9375 / NCTC 10341 / NRRL NRS-1264 / Gibson 46) protein is Succinate--CoA ligase [ADP-forming] subunit beta.